The following is a 434-amino-acid chain: Beta-enolase (434 aa).

Ala2 is subject to N-acetylalanine. Thr72 bears the Phosphothreonine mark. A phosphoserine mark is found at Ser83 and Ser157. His158 and Glu167 together coordinate substrate. A Phosphoserine modification is found at Ser176. Residue Thr205 is modified to Phosphothreonine. The active-site Proton donor is Glu210. Thr229 carries the post-translational modification Phosphothreonine. Residue Tyr236 is modified to Phosphotyrosine. Asp245 contributes to the Mg(2+) binding site. A Phosphoserine modification is found at Ser263. Substrate contacts are provided by Glu293 and Asp318. Residues Glu293 and Asp318 each coordinate Mg(2+). Lys343 acts as the Proton acceptor in catalysis. Substrate is bound by residues Ser370–Ser373 and Lys394.

Belongs to the enolase family. Mammalian enolase is composed of 3 isozyme subunits, alpha, beta and gamma, which can form homodimers or heterodimers which are cell-type and development-specific. Interacts with PNKD. The cofactor is Mg(2+).

Its subcellular location is the cytoplasm. It catalyses the reaction (2R)-2-phosphoglycerate = phosphoenolpyruvate + H2O. Its pathway is carbohydrate degradation; glycolysis; pyruvate from D-glyceraldehyde 3-phosphate: step 4/5. Glycolytic enzyme that catalyzes the conversion of 2-phosphoglycerate to phosphoenolpyruvate. Appears to have a function in striated muscle development and regeneration. The sequence is that of Beta-enolase (ENO3) from Sus scrofa (Pig).